A 500-amino-acid polypeptide reads, in one-letter code: Probable cytochrome P450 514A2 (500 aa).

A helical membrane pass occupies residues 4–24; that stretch reads IYTIILTIIILVLIISIKDLF. Cys-446 provides a ligand contact to heme.

It belongs to the cytochrome P450 family. Heme is required as a cofactor.

The protein localises to the membrane. This is Probable cytochrome P450 514A2 (cyp514A2) from Dictyostelium discoideum (Social amoeba).